We begin with the raw amino-acid sequence, 894 residues long: Translation initiation factor IF-2 (894 aa).

The segment at 25-304 (ADAGMNKASS…KPTSMQHGFD (280 aa)) is disordered. Composition is skewed to basic and acidic residues over residues 33-44 (SSDHVSDEEKQK), 52-62 (EHGDKSGESEP), 101-174 (STIE…KEMN), 184-239 (AKKE…ENSD), and 247-263 (YARE…EGGA). A compositionally biased stretch (basic residues) spans 283 to 293 (RGGKGRNKGKL). Positions 393-562 (PRAPVVTIMG…LLQSEVLELT (170 aa)) constitute a tr-type G domain. Positions 402 to 409 (GHVDHGKT) are G1. 402–409 (GHVDHGKT) is a binding site for GTP. Residues 427–431 (GITQH) are G2. The tract at residues 448 to 451 (DTPG) is G3. GTP contacts are provided by residues 448–452 (DTPGH) and 502–505 (NKID). The G4 stretch occupies residues 502 to 505 (NKID). Residues 538-540 (SAK) are G5.

It belongs to the TRAFAC class translation factor GTPase superfamily. Classic translation factor GTPase family. IF-2 subfamily.

Its subcellular location is the cytoplasm. Its function is as follows. One of the essential components for the initiation of protein synthesis. Protects formylmethionyl-tRNA from spontaneous hydrolysis and promotes its binding to the 30S ribosomal subunits. Also involved in the hydrolysis of GTP during the formation of the 70S ribosomal complex. The protein is Translation initiation factor IF-2 of Vibrio campbellii (strain ATCC BAA-1116).